Consider the following 743-residue polypeptide: Ribosome biogenesis protein BOP1 homolog (743 aa).

5 WD repeats span residues 365–404 (GHTATVRSVSVSPNGQYLATGCDDHLVRVYEVQTGRLMKR), 575–615 (KFSE…RRFK), 617–655 (SGGVTTCLSIHPEGDNFLVGDTTSHTSWFDMDFSDKPYK), 659–701 (SHKG…DYNK), and 712–743 (KHQRSVYAVAWHPSLAWLFTSTEDGVVTAWTE).

It belongs to the WD repeat BOP1/ERB1 family.

It is found in the nucleus. Its subcellular location is the nucleolus. The protein localises to the nucleoplasm. Required for maturation of ribosomal RNAs and formation of the large ribosomal subunit. This Leishmania braziliensis protein is Ribosome biogenesis protein BOP1 homolog.